A 319-amino-acid polypeptide reads, in one-letter code: Peroxidase 62 (319 aa).

The signal sequence occupies residues 1 to 22 (MGLVRSFALVIVFLSCLIAVYG). 4 cysteine pairs are disulfide-bonded: Cys34–Cys110, Cys67–Cys72, Cys116–Cys315, and Cys195–Cys226. Catalysis depends on His65, which acts as the Proton acceptor. Residues Asp66, Val69, Gly71, Asp73, and Ser75 each contribute to the Ca(2+) site. Substrate is bound at residue Pro157. His188 contributes to the heme b binding site. A Ca(2+)-binding site is contributed by Thr189. Asn204 is a glycosylation site (N-linked (GlcNAc...) asparagine). Positions 239, 242, and 247 each coordinate Ca(2+). N-linked (GlcNAc...) asparagine glycosylation occurs at Asn253.

Belongs to the peroxidase family. Classical plant (class III) peroxidase subfamily. Requires heme b as cofactor. Ca(2+) serves as cofactor. In terms of tissue distribution, mainly expressed in roots.

It is found in the secreted. The enzyme catalyses 2 a phenolic donor + H2O2 = 2 a phenolic radical donor + 2 H2O. Removal of H(2)O(2), oxidation of toxic reductants, biosynthesis and degradation of lignin, suberization, auxin catabolism, response to environmental stresses such as wounding, pathogen attack and oxidative stress. These functions might be dependent on each isozyme/isoform in each plant tissue. The chain is Peroxidase 62 (PER62) from Arabidopsis thaliana (Mouse-ear cress).